Here is a 391-residue protein sequence, read N- to C-terminus: MFGTATRESATRVLLLGSGELGKEVAIECQRLGLEVIACDRYPDAPAMQVAHRSYVFDMLDASELEKVIAAEQPAFVVPEIEAIATDKLVELEEQGLNVVPSAKATKLTMNREGIRRLAAEELGLTTSPYRFADNYQQFVEAVEAVSIPCVVKPVMSSSGKGQSVIKSPADIEKAWQYAQEGGRTGAGRVIVEGFIDFDYEITLLTVRAVDGVHFCAPIGHRQEDGDYRESWQPQQMSENAIKAAEYTAEQVVNALGGYGIFGVELFVKGDKVIFNEVSPRPHDTGLVTLISQEMSEFALHVRAFTGMPVNKIVQYGPSASAVILGNGQSENLRFDGMSDALEQPQTQLRLFGKPDINGRRRLGVVLTRRSSTEKAVDAAIESAKKIKIIY.

N(1)-(5-phospho-beta-D-ribosyl)glycinamide-binding positions include 20-21 and Glu80; that span reads EL. ATP-binding positions include Arg112, Lys153, 158 to 163, 193 to 196, and Glu201; these read SSGKGQ and EGFI. Positions 117–306 constitute an ATP-grasp domain; that stretch reads RLAAEELGLT…EFALHVRAFT (190 aa). Mg(2+) contacts are provided by Glu265 and Glu277. N(1)-(5-phospho-beta-D-ribosyl)glycinamide contacts are provided by residues Asp284, Lys354, and 361–362; that span reads RR.

It belongs to the PurK/PurT family. Homodimer.

It carries out the reaction N(1)-(5-phospho-beta-D-ribosyl)glycinamide + formate + ATP = N(2)-formyl-N(1)-(5-phospho-beta-D-ribosyl)glycinamide + ADP + phosphate + H(+). Its pathway is purine metabolism; IMP biosynthesis via de novo pathway; N(2)-formyl-N(1)-(5-phospho-D-ribosyl)glycinamide from N(1)-(5-phospho-D-ribosyl)glycinamide (formate route): step 1/1. Functionally, involved in the de novo purine biosynthesis. Catalyzes the transfer of formate to 5-phospho-ribosyl-glycinamide (GAR), producing 5-phospho-ribosyl-N-formylglycinamide (FGAR). Formate is provided by PurU via hydrolysis of 10-formyl-tetrahydrofolate. In Vibrio vulnificus (strain CMCP6), this protein is Formate-dependent phosphoribosylglycinamide formyltransferase.